We begin with the raw amino-acid sequence, 57 residues long: Large ribosomal subunit protein bL32 (57 aa).

Over residues 1–19 the composition is skewed to basic residues; it reads MAVPKRRKSRSNTRSRRSQ. Residues 1–22 form a disordered region; that stretch reads MAVPKRRKSRSNTRSRRSQWKA.

The protein belongs to the bacterial ribosomal protein bL32 family.

The chain is Large ribosomal subunit protein bL32 from Mycobacterium tuberculosis (strain ATCC 25177 / H37Ra).